The sequence spans 141 residues: ATP synthase epsilon chain (141 aa).

Belongs to the ATPase epsilon chain family. F-type ATPases have 2 components, CF(1) - the catalytic core - and CF(0) - the membrane proton channel. CF(1) has five subunits: alpha(3), beta(3), gamma(1), delta(1), epsilon(1). CF(0) has three main subunits: a, b and c.

It is found in the cell inner membrane. In terms of biological role, produces ATP from ADP in the presence of a proton gradient across the membrane. This chain is ATP synthase epsilon chain, found in Methylobacillus flagellatus (strain ATCC 51484 / DSM 6875 / VKM B-1610 / KT).